A 28-amino-acid chain; its full sequence is uncharacterized protein (28 aa).

This is an uncharacterized protein from Escherichia coli (Bacteriophage T4).